The chain runs to 115 residues: Hydrogenase maturation factor HypA (115 aa).

His2 serves as a coordination point for Ni(2+). Positions 73, 76, 89, and 92 each coordinate Zn(2+).

Belongs to the HypA/HybF family.

Functionally, involved in the maturation of [NiFe] hydrogenases. Required for nickel insertion into the metal center of the hydrogenase. The sequence is that of Hydrogenase maturation factor HypA from Aquifex aeolicus (strain VF5).